Reading from the N-terminus, the 191-residue chain is MITIKEKRKTRIGEEFIFSLKAPISFSNAIRRIMISEVPTFAIEDVYIYENSSSMDDEILAHRLGLIPIKGKPLLENEVITFTLEKEGPCTVYSSDLKSENGEVAFKNIPIVKLGKGQRIQIECEAIPGIGKVHAKWQPCNAVYKQIADDEVEFFVETFGQMEAEEILEEAVKILKNKAESFLQQLEMIEQ.

It belongs to the archaeal Rpo3/eukaryotic RPB3 RNA polymerase subunit family. As to quaternary structure, part of the RNA polymerase complex. Interacts with Rpo12. Forms an Rpo3-Rpo10-Rpo11-Rpo12 complex upon coexpression.

Its subcellular location is the cytoplasm. The enzyme catalyses RNA(n) + a ribonucleoside 5'-triphosphate = RNA(n+1) + diphosphate. In terms of biological role, DNA-dependent RNA polymerase (RNAP) catalyzes the transcription of DNA into RNA using the four ribonucleoside triphosphates as substrates. This is DNA-directed RNA polymerase subunit Rpo3 from Methanocaldococcus jannaschii (strain ATCC 43067 / DSM 2661 / JAL-1 / JCM 10045 / NBRC 100440) (Methanococcus jannaschii).